The primary structure comprises 264 residues: Thymidylate synthase (264 aa).

DUMP is bound by residues arginine 21 and 126–127 (RR). The active-site Nucleophile is cysteine 146. DUMP is bound by residues 166 to 169 (RSAD), asparagine 177, and 207 to 209 (HLY). (6R)-5,10-methylene-5,6,7,8-tetrahydrofolate is bound at residue aspartate 169. Alanine 263 contributes to the (6R)-5,10-methylene-5,6,7,8-tetrahydrofolate binding site.

It belongs to the thymidylate synthase family. Bacterial-type ThyA subfamily. In terms of assembly, homodimer.

The protein resides in the cytoplasm. The catalysed reaction is dUMP + (6R)-5,10-methylene-5,6,7,8-tetrahydrofolate = 7,8-dihydrofolate + dTMP. Its pathway is pyrimidine metabolism; dTTP biosynthesis. Functionally, catalyzes the reductive methylation of 2'-deoxyuridine-5'-monophosphate (dUMP) to 2'-deoxythymidine-5'-monophosphate (dTMP) while utilizing 5,10-methylenetetrahydrofolate (mTHF) as the methyl donor and reductant in the reaction, yielding dihydrofolate (DHF) as a by-product. This enzymatic reaction provides an intracellular de novo source of dTMP, an essential precursor for DNA biosynthesis. The sequence is that of Thymidylate synthase from Bradyrhizobium diazoefficiens (strain JCM 10833 / BCRC 13528 / IAM 13628 / NBRC 14792 / USDA 110).